Consider the following 447-residue polypeptide: Zinc finger protein ZIC 1 (447 aa).

The C2H2-type 1; atypical zinc-finger motif lies at 225 to 260 (LICKWIEPEQLANPKKSCNKTFSTMHELVTHVTVEH). The C2H2-type 2; atypical zinc-finger motif lies at 269–296 (HICFWEECPREGKPFKAKYKLVNHIRVH). 3 consecutive C2H2-type zinc fingers follow at residues 302–326 (FPCPFPGCGKVFARSENLKIHKRTH), 332–356 (FKCEFEGCDRRFANSSDRKKHMHVH), and 362–384 (YLCKMCDKSYTHPSSLRKHMKVH). Residues 375 to 434 (SSLRKHMKVHESSSQGSQPSPAASSGYESSTPPTIVSPTTDNPTTSSMSPSSSAVHHTAG) are disordered. Positions 386–427 (SSSQGSQPSPAASSGYESSTPPTIVSPTTDNPTTSSMSPSSS) are enriched in low complexity.

The protein belongs to the GLI C2H2-type zinc-finger protein family. As to quaternary structure, interacts (via the C2H2-type domains 3, 4 and 5) with MDFIC (via the C2H2-type domains 3, 4 and 5). Interacts with GLI1; the interaction enhances transcription activation. Interacts with GLI2. Interacts with GLI3; the interaction enhances transcription activation. As to expression, expressed in osteoblasts (at protein level). Expressed in the CNS. A high level expression is seen in the cerebellum, while a low level expression is seen in the olfactory bulb, diencephalon, and brainstem. Expressed in lumbar spine and iliac crest.

Its subcellular location is the nucleus. The protein localises to the cytoplasm. Functionally, acts as a transcriptional activator. Involved in neurogenesis. Plays important roles in the early stage of organogenesis of the CNS, as well as during dorsal spinal cord development and maturation of the cerebellum. Involved in the spatial distribution of mossy fiber (MF) neurons within the pontine gray nucleus (PGN). Plays a role in the regulation of MF axon pathway choice. Promotes MF migration towards ipsilaterally-located cerebellar territories. May have a role in shear flow mechanotransduction in osteocytes. Retains nuclear GLI1 and GLI3 in the cytoplasm. Binds to the minimal GLI-consensus sequence 5'-TGGGTGGTC-3'. The polypeptide is Zinc finger protein ZIC 1 (Zic1) (Mus musculus (Mouse)).